Consider the following 383-residue polypeptide: ATP phosphoribosyltransferase regulatory subunit (383 aa).

It belongs to the class-II aminoacyl-tRNA synthetase family. HisZ subfamily. As to quaternary structure, heteromultimer composed of HisG and HisZ subunits.

The protein localises to the cytoplasm. It participates in amino-acid biosynthesis; L-histidine biosynthesis; L-histidine from 5-phospho-alpha-D-ribose 1-diphosphate: step 1/9. Required for the first step of histidine biosynthesis. May allow the feedback regulation of ATP phosphoribosyltransferase activity by histidine. The chain is ATP phosphoribosyltransferase regulatory subunit from Neisseria gonorrhoeae (strain NCCP11945).